A 132-amino-acid chain; its full sequence is Sirohydrochlorin cobaltochelatase (132 aa).

The Proton acceptor role is filled by H10. H10 is a Co(2+) binding site. Residues R46 and 69 to 74 contribute to the substrate site; that span reads ISYGLH. H74 contributes to the Co(2+) binding site.

It belongs to the CbiX family. CbiXS subfamily. In terms of assembly, homotetramer; dimer of dimers.

It carries out the reaction Co-sirohydrochlorin + 2 H(+) = sirohydrochlorin + Co(2+). It participates in cofactor biosynthesis; adenosylcobalamin biosynthesis; cob(II)yrinate a,c-diamide from sirohydrochlorin (anaerobic route): step 1/10. In terms of biological role, catalyzes the insertion of Co(2+) into sirohydrochlorin as part of the anaerobic pathway to cobalamin biosynthesis. This Archaeoglobus fulgidus (strain ATCC 49558 / DSM 4304 / JCM 9628 / NBRC 100126 / VC-16) protein is Sirohydrochlorin cobaltochelatase.